We begin with the raw amino-acid sequence, 437 residues long: Trigger factor (437 aa).

Residues 161–246 form the PPIase FKBP-type domain; it reads DDQVNIDFVG…VNSVSAPVLP (86 aa).

It belongs to the FKBP-type PPIase family. Tig subfamily.

The protein resides in the cytoplasm. The catalysed reaction is [protein]-peptidylproline (omega=180) = [protein]-peptidylproline (omega=0). In terms of biological role, involved in protein export. Acts as a chaperone by maintaining the newly synthesized protein in an open conformation. Functions as a peptidyl-prolyl cis-trans isomerase. The protein is Trigger factor of Pseudomonas putida (strain ATCC 700007 / DSM 6899 / JCM 31910 / BCRC 17059 / LMG 24140 / F1).